We begin with the raw amino-acid sequence, 250 residues long: 5'-nucleotidase SurE (250 aa).

Residues D8, D9, S39, and N95 each contribute to the a divalent metal cation site.

This sequence belongs to the SurE nucleotidase family. A divalent metal cation serves as cofactor.

Its subcellular location is the cytoplasm. The catalysed reaction is a ribonucleoside 5'-phosphate + H2O = a ribonucleoside + phosphate. Functionally, nucleotidase that shows phosphatase activity on nucleoside 5'-monophosphates. The sequence is that of 5'-nucleotidase SurE from Cupriavidus pinatubonensis (strain JMP 134 / LMG 1197) (Cupriavidus necator (strain JMP 134)).